The following is a 575-amino-acid chain: Dual specificity protein phosphatase YVH1 (575 aa).

The tract at residues 185–213 (KHNNNNNNNNNNNNNNNNNNNNNNCCTFK) is disordered. Residues 187 to 208 (NNNNNNNNNNNNNNNNNNNNNN) show a composition bias toward low complexity. The 153-residue stretch at 283 to 435 (NYKINQEEDT…LLLYEKMNYT (153 aa)) folds into the Tyrosine-protein phosphatase domain. The active-site Phosphocysteine intermediate is cysteine 379. Residues cysteine 476 and cysteine 530 each contribute to the Zn(2+) site.

The protein belongs to the protein-tyrosine phosphatase family. Non-receptor class dual specificity subfamily. Interacts with PES. Zn(2+) serves as cofactor.

Its subcellular location is the cytoplasm. It is found in the nucleus. It carries out the reaction O-phospho-L-tyrosyl-[protein] + H2O = L-tyrosyl-[protein] + phosphate. The enzyme catalyses O-phospho-L-seryl-[protein] + H2O = L-seryl-[protein] + phosphate. Functionally, dual specificity protein phosphatase which dephosphorylates both phosphotyrosine and phosphoserine residues. This Plasmodium falciparum (isolate 3D7) protein is Dual specificity protein phosphatase YVH1.